The sequence spans 872 residues: N-acetyltransferase eso1 (872 aa).

The segment at 1-591 (MELGKSKFSW…KQVKPKTYGR (591 aa)) is polymerase type-Y. Positions 29–285 (VAHIDQDAFY…LKITDIRMLG (257 aa)) constitute a UmuC domain. The UBZ3-type zinc-finger motif lies at 533-567 (SADETYTCEECEQKITLSERNEHEDYHIALSISRK). Positions 540, 543, 555, and 559 each coordinate Zn(2+). The tract at residues 569–602 (RYNNLVPPSHDKPKQVKPKTYGRKTGSKHYAPLS) is disordered. Residues 583–595 (QVKPKTYGRKTGS) show a composition bias toward basic residues. An acetyltransferase region spans residues 592-872 (KTGSKHYAPL…KSLRYAVYES (281 aa)). The CCHH-type zinc finger occupies 653–677 (VTCSECSMEYNSTSEEDILLHSRFH).

This sequence in the C-terminal section; belongs to the acetyltransferase family. ECO subfamily. In the N-terminal section; belongs to the DNA polymerase type-Y family. As to quaternary structure, interacts with pds5.

It is found in the nucleus. In terms of biological role, probable acetyltransferase required for the establishment of sister chromatid cohesion and couple the processes of cohesion and DNA replication to ensure that only sister chromatids become paired together. In contrast to the structural cohesins, the deposition and establishment factors are required only during S phase. The relevance of acetyltransferase function remains unclear. The sequence is that of N-acetyltransferase eso1 (eso1) from Schizosaccharomyces pombe (strain 972 / ATCC 24843) (Fission yeast).